The sequence spans 565 residues: Nephrocystin-1 (565 aa).

The segment covering 1–32 has biased composition (acidic residues); the sequence is GEEEDEEEEEEEESEEGGGEEEESEEEEEEKQ. 2 disordered regions span residues 1 to 46 and 95 to 132; these read GEEE…KEYI and VEPYNKEEGQDTSEEEDSEEDVEVGDQTAGGEEVKQRT. Positions 2 to 48 form a coiled coil; the sequence is EEEDEEEEEEEESEEGGGEEEESEEEEEEKQENESHHQATSKEYIAV. The residue at position 14 (serine 14) is a Phosphoserine. The SH3 domain occupies 40–100; sequence ATSKEYIAVG…PRTYVEPYNK (61 aa). The segment covering 104–118 has biased composition (acidic residues); the sequence is QDTSEEEDSEEDVEV. Tyrosine 182 carries the phosphotyrosine; by FAK2 modification. Tyrosine 554 is modified (phosphotyrosine; by SRC).

Belongs to the nephrocystin-1 family. Interacts with Crk-associated substrate BCAR1, NPHP4, PTK2B/PYK2 and tensin. Interacts with INVS and NPHP3. Interacts with AHI1 and TNK2. Interacts with NPHP4 in a complex containing NPHP1, NPHP4 and RPGRIP1L/NPHP8. Interacts with IQCB1; the interaction likely requires additional interactors. Interacts with KIF7. Interacts with ANKS3. Interacts with SPATA7. Interacts with FLNA. Expressed in renal cells (at protein level).

The protein localises to the cell junction. Its subcellular location is the adherens junction. The protein resides in the cell projection. It is found in the cilium. It localises to the cytoplasm. The protein localises to the cytoskeleton. Its subcellular location is the cilium axoneme. The protein resides in the tight junction. Its function is as follows. Together with BCAR1 it may play a role in the control of epithelial cell polarity. Involved in the organization of apical junctions in kidney cells together with NPHP4 and RPGRIP1L/NPHP8. Does not seem to be strictly required for ciliogenesis. Seems to help to recruit PTK2B/PYK2 to cell matrix adhesions, thereby initiating phosphorylation of PTK2B/PYK2 and PTK2B/PYK2-dependent signaling. May play a role in the regulation of intraflagellar transport (IFT) during cilia assembly. Required for normal retina development. In connecting photoreceptor cilia influences the movement of some IFT proteins such as IFT88 and WDR19. Involved in spermatogenesis. In Canis lupus familiaris (Dog), this protein is Nephrocystin-1 (NPHP1).